Consider the following 123-residue polypeptide: Small ribosomal subunit protein uS12 (123 aa).

D89 carries the 3-methylthioaspartic acid modification. Residues 103–123 form a disordered region; it reads DTSGVQDRRQGRSKYGAKRPK. Over residues 113-123 the composition is skewed to basic residues; that stretch reads GRSKYGAKRPK.

The protein belongs to the universal ribosomal protein uS12 family. As to quaternary structure, part of the 30S ribosomal subunit. Contacts proteins S8 and S17. May interact with IF1 in the 30S initiation complex.

Its function is as follows. With S4 and S5 plays an important role in translational accuracy. In terms of biological role, interacts with and stabilizes bases of the 16S rRNA that are involved in tRNA selection in the A site and with the mRNA backbone. Located at the interface of the 30S and 50S subunits, it traverses the body of the 30S subunit contacting proteins on the other side and probably holding the rRNA structure together. The combined cluster of proteins S8, S12 and S17 appears to hold together the shoulder and platform of the 30S subunit. This is Small ribosomal subunit protein uS12 from Nitratidesulfovibrio vulgaris (strain ATCC 29579 / DSM 644 / CCUG 34227 / NCIMB 8303 / VKM B-1760 / Hildenborough) (Desulfovibrio vulgaris).